The chain runs to 484 residues: MSDRVRVRYAPSPTGYLHIGNARTALFNYLFAKHYDGDFVIRIEDTDSKRNLVDGESSQFDNLKWLGIEWDESVDKDKGYGPYRQSERAEIYNPLIQQLLDEDKAYKCYMTEDELEEERQQQIERGEMPRYGGKHAHLTEEERQQFEAEGRKPSIRFRVPKDTTYSFDDMVKGEISFDSNNMGDWVIVKKDGIPTYNFAVAIDDHYMEISDVIRGDDHISNTPKQLMIYETFGWEAPRFAHMSLIVNEERKKLSKRDGQILQFIEQYRDLGYLPEALFNFITLLGWSPEGENEIYSKEDFIKIFDEKRLSKSPAFFDKQKLAWVNNQYMKQKDTETVFELALPHLIKAELLPENPSEADLDWGRKLVSLYQKEMSYAGEIVPLSELFFRDEQTLGDDEQEVIAGEQVPELMNHLYSKLEALEPFEAAEIKKTIKEVQKETGIKGKQLFMPIRVAVTGQMHGPELPNTIEVLGKDKVLSRLKKYV.

The 'HIGH' region signature appears at 11 to 21 (PSPTGYLHIGN). The 'KMSKS' region signature appears at 252-256 (KLSKR). Lysine 255 is an ATP binding site.

This sequence belongs to the class-I aminoacyl-tRNA synthetase family. Glutamate--tRNA ligase type 1 subfamily. Monomer.

The protein localises to the cytoplasm. The enzyme catalyses tRNA(Glu) + L-glutamate + ATP = L-glutamyl-tRNA(Glu) + AMP + diphosphate. Catalyzes the attachment of glutamate to tRNA(Glu) in a two-step reaction: glutamate is first activated by ATP to form Glu-AMP and then transferred to the acceptor end of tRNA(Glu). This chain is Glutamate--tRNA ligase, found in Staphylococcus saprophyticus subsp. saprophyticus (strain ATCC 15305 / DSM 20229 / NCIMB 8711 / NCTC 7292 / S-41).